The sequence spans 504 residues: Maturase K (504 aa).

The protein belongs to the intron maturase 2 family. MatK subfamily.

The protein resides in the plastid. It is found in the chloroplast. Functionally, usually encoded in the trnK tRNA gene intron. Probably assists in splicing its own and other chloroplast group II introns. The protein is Maturase K of Lepidium virginicum (Virginia pepperweed).